Reading from the N-terminus, the 150-residue chain is FAD synthase (150 aa).

ATP is bound by residues threonine 11–phenylalanine 12, histidine 16–histidine 19, aspartate 96, and tyrosine 124.

This sequence belongs to the archaeal FAD synthase family. In terms of assembly, homodimer. It depends on a divalent metal cation as a cofactor.

The enzyme catalyses FMN + ATP + H(+) = FAD + diphosphate. The protein operates within cofactor biosynthesis; FAD biosynthesis; FAD from FMN: step 1/1. Functionally, catalyzes the transfer of the AMP portion of ATP to flavin mononucleotide (FMN) to produce flavin adenine dinucleotide (FAD) coenzyme. The polypeptide is FAD synthase (Methanococcus maripaludis (strain C7 / ATCC BAA-1331)).